We begin with the raw amino-acid sequence, 278 residues long: 4-deoxy-L-threo-5-hexosulose-uronate ketol-isomerase (278 aa).

Residues His196, His198, Glu203, and His245 each coordinate Zn(2+).

It belongs to the KduI family. Requires Zn(2+) as cofactor.

It catalyses the reaction 5-dehydro-4-deoxy-D-glucuronate = 3-deoxy-D-glycero-2,5-hexodiulosonate. The protein operates within glycan metabolism; pectin degradation; 2-dehydro-3-deoxy-D-gluconate from pectin: step 4/5. Catalyzes the isomerization of 5-dehydro-4-deoxy-D-glucuronate to 3-deoxy-D-glycero-2,5-hexodiulosonate. The sequence is that of 4-deoxy-L-threo-5-hexosulose-uronate ketol-isomerase from Shigella boydii serotype 4 (strain Sb227).